The chain runs to 391 residues: Processive diacylglycerol beta-glucosyltransferase (391 aa).

The protein belongs to the glycosyltransferase 28 family. UgtP subfamily.

It is found in the cell membrane. It carries out the reaction a 1,2-diacyl-3-O-(beta-D-glucopyranosyl)-sn-glycerol + UDP-alpha-D-glucose = a 1,2-diacyl-3-O-(beta-D-Glc-(1-&gt;6)-beta-D-Glc)-sn-glycerol + UDP + H(+). It catalyses the reaction a 1,2-diacyl-sn-glycerol + UDP-alpha-D-glucose = a 1,2-diacyl-3-O-(beta-D-glucopyranosyl)-sn-glycerol + UDP + H(+). Its pathway is glycolipid metabolism; diglucosyl-diacylglycerol biosynthesis. Its function is as follows. Processive glucosyltransferase involved in the biosynthesis of both the bilayer- and non-bilayer-forming membrane glucolipids. Is able to successively transfer two glucosyl residues to diacylglycerol (DAG), thereby catalyzing the formation of beta-monoglucosyl-DAG (3-O-(beta-D-glucopyranosyl)-1,2-diacyl-sn-glycerol) and beta-diglucosyl-DAG (3-O-(beta-D-glucopyranosyl-beta-(1-&gt;6)-D-glucopyranosyl)-1,2-diacyl-sn-glycerol). Beta-diglucosyl-DAG is the predominant glycolipid found in Bacillales and is also used as a membrane anchor for lipoteichoic acid (LTA). The protein is Processive diacylglycerol beta-glucosyltransferase of Staphylococcus epidermidis (strain ATCC 12228 / FDA PCI 1200).